The following is an 837-amino-acid chain: Phenylalanine--tRNA ligase beta subunit (837 aa).

Residues 39 to 149 (SASLEGIVTG…EMNIAIPKIG (111 aa)) enclose the tRNA-binding domain. The B5 domain maps to 415–520 (IEEQLLLLRR…RLIGYDRFDS (106 aa)). Residues aspartate 498, aspartate 504, glutamate 507, and glutamate 508 each contribute to the Mg(2+) site. The 94-residue stretch at 743–836 (PTVPSMERDI…LKVEFSAELR (94 aa)) folds into the FDX-ACB domain.

It belongs to the phenylalanyl-tRNA synthetase beta subunit family. Type 1 subfamily. As to quaternary structure, tetramer of two alpha and two beta subunits. Mg(2+) is required as a cofactor.

It is found in the cytoplasm. It carries out the reaction tRNA(Phe) + L-phenylalanine + ATP = L-phenylalanyl-tRNA(Phe) + AMP + diphosphate + H(+). This is Phenylalanine--tRNA ligase beta subunit from Prochlorococcus marinus (strain SARG / CCMP1375 / SS120).